Consider the following 677-residue polypeptide: DNA gyrase subunit B, novobiocin-resistant (677 aa).

The tract at residues 1 to 23 (MTTYDTRTATDTRGSEQPGHVGT) is disordered. The tract at residues 154-295 (IWTDGHRWTQ…RLLSAEIALQ (142 aa)) is novobiocin-binding. The 115-residue stretch at 456 to 570 (SEIFIVEGDS…EGHVHLSRPP (115 aa)) folds into the Toprim domain. Mg(2+)-binding residues include Glu462, Asp535, and Asp537.

This sequence belongs to the type II topoisomerase GyrB family. As to quaternary structure, heterotetramer, composed of two GyrA and two GyrB chains. In the heterotetramer, GyrA contains the active site tyrosine that forms a transient covalent intermediate with DNA, while GyrB binds cofactors and catalyzes ATP hydrolysis. The cofactor is Mg(2+). Mn(2+) is required as a cofactor. Requires Ca(2+) as cofactor.

Its subcellular location is the cytoplasm. It catalyses the reaction ATP-dependent breakage, passage and rejoining of double-stranded DNA.. Functionally, a type II topoisomerase that negatively supercoils closed circular double-stranded (ds) DNA in an ATP-dependent manner to modulate DNA topology and maintain chromosomes in an underwound state. Negative supercoiling favors strand separation, and DNA replication, transcription, recombination and repair, all of which involve strand separation. Also able to catalyze the interconversion of other topological isomers of dsDNA rings, including catenanes and knotted rings. Type II topoisomerases break and join 2 DNA strands simultaneously in an ATP-dependent manner. The protein is DNA gyrase subunit B, novobiocin-resistant of Streptomyces niveus (Streptomyces spheroides).